The following is a 75-amino-acid chain: Small ribosomal subunit protein bS16c (75 aa).

This sequence belongs to the bacterial ribosomal protein bS16 family.

The protein localises to the plastid. It is found in the chloroplast. The protein is Small ribosomal subunit protein bS16c of Cyanidium caldarium (Red alga).